Consider the following 310-residue polypeptide: Tagatose-6-phosphate kinase (310 aa).

The protein belongs to the carbohydrate kinase PfkB family. LacC subfamily.

The enzyme catalyses D-tagatofuranose 6-phosphate + ATP = D-tagatofuranose 1,6-bisphosphate + ADP + H(+). It participates in carbohydrate metabolism; D-tagatose 6-phosphate degradation; D-glyceraldehyde 3-phosphate and glycerone phosphate from D-tagatose 6-phosphate: step 1/2. The sequence is that of Tagatose-6-phosphate kinase from Streptococcus mutans serotype c (strain ATCC 700610 / UA159).